We begin with the raw amino-acid sequence, 179 residues long: Plasmid-derived single-stranded DNA-binding protein (179 aa).

One can recognise an SSB domain in the interval 6 to 110 (INKVILVGRL…ILVKTTGTMQ (105 aa)). The DNA-binding element occupies 55–61 (WHRVVLF). Positions 117–179 (GAQTQPEEGQ…DYGFSDDIPF (63 aa)) are disordered. The segment covering 118–132 (AQTQPEEGQQFSGQP) has biased composition (polar residues). Over residues 145–155 (GGAKTKGRGRK) the composition is skewed to basic residues. Residues 167–179 (EGDDYGFSDDIPF) are compositionally biased toward acidic residues.

In terms of assembly, homotetramer.

Functionally, may contribute to the conjugative processing of DNA. It has a functional relationship with Psi (plasmid-mediated sos inhibition) proteins. The protein is Plasmid-derived single-stranded DNA-binding protein (ssbF) of Escherichia coli (strain K12).